The sequence spans 117 residues: SPbeta prophage-derived uncharacterized protein YosL (117 aa).

The chain is SPbeta prophage-derived uncharacterized protein YosL (yosL) from Bacillus subtilis (strain 168).